A 118-amino-acid chain; its full sequence is Putative pterin-4-alpha-carbinolamine dehydratase (118 aa).

This sequence belongs to the pterin-4-alpha-carbinolamine dehydratase family.

The enzyme catalyses (4aS,6R)-4a-hydroxy-L-erythro-5,6,7,8-tetrahydrobiopterin = (6R)-L-erythro-6,7-dihydrobiopterin + H2O. The sequence is that of Putative pterin-4-alpha-carbinolamine dehydratase from Azotobacter vinelandii (strain DJ / ATCC BAA-1303).